Consider the following 272-residue polypeptide: Orotidine 5'-phosphate decarboxylase (272 aa).

Catalysis depends on K93, which acts as the Proton donor.

This sequence belongs to the OMP decarboxylase family. Type 2 subfamily.

The enzyme catalyses orotidine 5'-phosphate + H(+) = UMP + CO2. It functions in the pathway pyrimidine metabolism; UMP biosynthesis via de novo pathway; UMP from orotate: step 2/2. The polypeptide is Orotidine 5'-phosphate decarboxylase (Roseiflexus castenholzii (strain DSM 13941 / HLO8)).